A 461-amino-acid polypeptide reads, in one-letter code: Argininosuccinate lyase (461 aa).

The protein belongs to the lyase 1 family. Argininosuccinate lyase subfamily.

The protein localises to the cytoplasm. It carries out the reaction 2-(N(omega)-L-arginino)succinate = fumarate + L-arginine. It participates in amino-acid biosynthesis; L-arginine biosynthesis; L-arginine from L-ornithine and carbamoyl phosphate: step 3/3. This Chloroflexus aurantiacus (strain ATCC 29366 / DSM 635 / J-10-fl) protein is Argininosuccinate lyase.